The sequence spans 459 residues: uncharacterized protein (459 aa).

The B12-binding domain maps to 13–145; the sequence is TESAIKRVVG…DALSKGRELK (133 aa). Positions 188 to 402 constitute a Radical SAM core domain; that stretch reads ADGVPFGVVM…MNWRKYTTID (215 aa). Positions 202, 206, and 209 each coordinate [4Fe-4S] cluster.

It belongs to the methyltransferase superfamily. The cofactor is [4Fe-4S] cluster.

This is an uncharacterized protein from Pyrococcus horikoshii (strain ATCC 700860 / DSM 12428 / JCM 9974 / NBRC 100139 / OT-3).